A 497-amino-acid polypeptide reads, in one-letter code: MLKSTATRSITRLSQVYNVPAATYRACLVSRRFYSPPAAGVKLDDNFSLETHTDIQAAAKAQASARASASGTTPDAVVASGSTAMSHAYQENTGFGTRPIYLDMQATTPTDPRVLDTMLKFYTGLYGNPHSNTHSYGWETNTAVENARAHVAKMINADPKEIIFTSGATESNNMVLKGVPRFYKKTKKHIITTRTEHKCVLEAARAMMKEGFEVTFLNVDDQGLIDLKELEDAIRPDTCLVSVMAVNNEIGVIQPIKEIGAICRKNKIYFHTDAAQAYGKIHIDVNEMNIDLLSISSHKIYGPKGIGAIYVRRRPRVRLEPLLSGGGQERGLRSGTLAPPLVAGFGEAARLMKKEFDNDQAHIKRLSDKLVKGLLSAEHTTLNGSPDHRYPGCVNVSFAYVEGESLLMALRDIALSSGSACTSASLEPSYVLHALGKDDALAHSSIRFGIGRFSTEEEVDYVVKAVSDRVKFLRELSPLWEMVQEGIDLNSIKWSGH.

The transit peptide at 1 to 33 directs the protein to the mitochondrion; it reads MLKSTATRSITRLSQVYNVPAATYRACLVSRRF. Pyridoxal 5'-phosphate is bound by residues 168–169, Asn248, Gln276, and 296–298; these read AT and SSH. The residue at position 299 (Lys299) is an N6-(pyridoxal phosphate)lysine. Pyridoxal 5'-phosphate is bound at residue Thr336. Catalysis depends on Cys421, which acts as the Cysteine persulfide intermediate. Cys421 provides a ligand contact to [2Fe-2S] cluster.

Belongs to the class-V pyridoxal-phosphate-dependent aminotransferase family. NifS/IscS subfamily. Requires pyridoxal 5'-phosphate as cofactor.

The protein resides in the mitochondrion. It catalyses the reaction (sulfur carrier)-H + L-cysteine = (sulfur carrier)-SH + L-alanine. In terms of biological role, catalyzes the removal of elemental sulfur from cysteine to produce alanine. It supplies the inorganic sulfur for iron-sulfur (Fe-S) clusters. Plays a role in both tRNA-processing and mitochondrial metabolism. Involved in the 2-thio-modification of both 5-carboxymethylaminomethyl-2-thiouridine in mitochondrial tRNAs and 5-methoxycarbonylmethyl-2-thiouridine (mcm5s2U) in cytoplasmic tRNAs. The protein is Cysteine desulfurase, mitochondrial of Saccharomyces cerevisiae (strain ATCC 204508 / S288c) (Baker's yeast).